The following is a 443-amino-acid chain: Regulator of rDNA transcription protein 5 (443 aa).

Positions 4–87 constitute an RRM 1 domain; that stretch reads SRIYIANVSY…RVLRVRTHNP (84 aa). Residues 112–140 are disordered; that stretch reads EDTAASGERAPTDAQDHPDQPQEGHMSPD. A compositionally biased stretch (basic and acidic residues) spans 121-133; it reads APTDAQDHPDQPQ. The region spanning 183–268 is the RRM 2 domain; the sequence is DTVYCAFLPK…TKISIKPAYI (86 aa). Residues 408 to 443 are disordered; sequence GMTKQSVGSNKKKNKKKKSARGKEVRKLSVSNTTTQ. Over residues 417–427 the composition is skewed to basic residues; sequence NKKKNKKKKSA.

The protein belongs to the RRT5 family.

Its function is as follows. May be involved in the modulation of rDNA transcription. The polypeptide is Regulator of rDNA transcription protein 5 (RRT5) (Candida glabrata (strain ATCC 2001 / BCRC 20586 / JCM 3761 / NBRC 0622 / NRRL Y-65 / CBS 138) (Yeast)).